The sequence spans 714 residues: MQPRTPLTLCVLLSQVLLVTSADDLECTPGFQRKVLHIHQPAEFIEDQPVLNLTFNDCKGNEKLHYEVSSPHFKVNSDGTLVALRNITAVGRTLFVHARTPHAEDMAELVIVGGKDIQGSLQDIFKFARTSPVPRQKRSIVVSPILIPENQRQPFPRDVGKVVDSDRPEGSKFRLTGKGVDQDPKGTFRINENTGSVSVTRTLDRETIATYQLYVETTDASGKTLEGPVPLEVIVIDQNDNRPIFREGPYIGHVMEGSPTGTTVMRMTAFDADDPATDNALLRYNIRQQTPDKPSPNMFYIDPEKGDIVTVVSPALLDRETLENPKYELIIEAQDMAGLDVGLTGTATATIVIDDKNDHSPKFTKKEFQATVEEGAVGVIVNLTVEDKDDPTTGAWRAAYTIINGNPGQSFEIHTNPQTNEGMLSVVKPLDYEISAFHTLLIKVENEDPLVPDVSYGPSSTATVHITVLDVNEGPVFYPDPMMVTKQENISVGSVLLTVNATDPDSLQHQTIRYSIYKDPAGWLSINPINGTVDTTAVLDRESPFVHNSVYTALFLAIDSGNPPATGTGTLLITLEDINDNAPVIYPTVAEVCDDARNLSVVILGASDKDLHPNTDPFKFEIHKQTVPDKVWKISKINNTHALVSLLQNLNKANYNLPIMVTDSGKPPMTNITDLRVQVCSCKNSKVDCNGAGALHLSLSLLLLFSLLSLLSGL.

Positions 1–22 are cleaved as a signal peptide; sequence MQPRTPLTLCVLLSQVLLVTSA. Residues 23–138 constitute a propeptide that is removed on maturation; that stretch reads DDLECTPGFQ…RTSPVPRQKR (116 aa). Cadherin domains follow at residues 143–245, 246–363, 364–477, 478–585, and 586–680; these read SPIL…RPIF, REGP…SPKF, TKKE…GPVF, YPDP…APVI, and YPTV…VQVC. A disordered region spans residues 156–183; sequence PRDVGKVVDSDRPEGSKFRLTGKGVDQD. Residues 158 to 172 show a composition bias toward basic and acidic residues; the sequence is DVGKVVDSDRPEGSK. N-linked (GlcNAc...) asparagine glycosylation is found at Asn382, Asn489, Asn500, Asn530, Asn598, Asn638, and Asn671. Residue Gly693 is the site of GPI-anchor amidated glycine attachment. Positions 694-714 are cleaved as a propeptide — removed in mature form; sequence ALHLSLSLLLLFSLLSLLSGL.

In terms of assembly, by contrast to classical cadherins, homodimerization in trans is not mediated by cadherin EC1 domain strand-swapping, but instead through a homophilic adhesive interface which joins two elongated EC1-EC2 domains through a region near their Ca2+-binding sites to form a tetrahedral, X-like shape.

The protein localises to the cell membrane. The protein resides in the cytoplasm. Its function is as follows. Cadherins are calcium-dependent cell adhesion proteins. They preferentially interact with themselves in a homophilic manner in connecting cells; cadherins may thus contribute to the sorting of heterogeneous cell types. May act as a negative regulator of neural cell growth. This chain is Cadherin-13 (Cdh13), found in Mus musculus (Mouse).